A 674-amino-acid polypeptide reads, in one-letter code: UvrABC system protein B (674 aa).

The Helicase ATP-binding domain occupies 26–414 (EGLDSGLAHQ…SGNDIAEQVV (389 aa)). 39-46 (GVTGSGKT) is a binding site for ATP. The Beta-hairpin signature appears at 92 to 115 (YYDYYQPEAYVPTTDTFIEKDASV). One can recognise a Helicase C-terminal domain in the interval 432 to 586 (QVDDLLSEIR…ALHNKKNGIT (155 aa)). In terms of domain architecture, UVR spans 634–669 (ELEIQRLETEMYDLAQNLEFEKAAEARDKIHTLRQQ).

Belongs to the UvrB family. As to quaternary structure, forms a heterotetramer with UvrA during the search for lesions. Interacts with UvrC in an incision complex.

The protein resides in the cytoplasm. In terms of biological role, the UvrABC repair system catalyzes the recognition and processing of DNA lesions. A damage recognition complex composed of 2 UvrA and 2 UvrB subunits scans DNA for abnormalities. Upon binding of the UvrA(2)B(2) complex to a putative damaged site, the DNA wraps around one UvrB monomer. DNA wrap is dependent on ATP binding by UvrB and probably causes local melting of the DNA helix, facilitating insertion of UvrB beta-hairpin between the DNA strands. Then UvrB probes one DNA strand for the presence of a lesion. If a lesion is found the UvrA subunits dissociate and the UvrB-DNA preincision complex is formed. This complex is subsequently bound by UvrC and the second UvrB is released. If no lesion is found, the DNA wraps around the other UvrB subunit that will check the other stand for damage. The sequence is that of UvrABC system protein B from Photobacterium profundum (strain SS9).